The sequence spans 425 residues: CAAX prenyl protease 1 homolog (425 aa).

5 helical membrane-spanning segments follow: residues 3-23, 62-80, 109-129, 155-175, and 188-208; these read LPYL…ETYL, FHFI…ILYY, LAFL…FSLY, GILL…IIVQ, and FMFA…APLF. A Zn(2+)-binding site is contributed by His-284. The active site involves Glu-285. His-288 contributes to the Zn(2+) binding site. 2 helical membrane-spanning segments follow: residues 295–315 and 332–352; these read VYSF…YTLV and VIIG…LLSF. Glu-362 contacts Zn(2+). Asp-366 functions as the Proton donor in the catalytic mechanism.

It belongs to the peptidase M48A family. The cofactor is Zn(2+).

It localises to the endoplasmic reticulum membrane. It carries out the reaction Hydrolyzes the peptide bond -P2-(S-farnesyl or geranylgeranyl)C-P1'-P2'-P3'-COOH where P1' and P2' are amino acids with aliphatic side chains and P3' is any C-terminal residue.. Its function is as follows. Proteolytically removes the C-terminal three residues of farnesylated proteins. This chain is CAAX prenyl protease 1 homolog (FACE1), found in Oryza sativa subsp. japonica (Rice).